The following is a 788-amino-acid chain: Probable potassium transporter 9 (788 aa).

Over 1–21 the chain is Cytoplasmic; the sequence is MDPEFGRGMAPRKREPWRTTL. Residues 22–42 form a helical membrane-spanning segment; it reads LLAYQSLGVVYGDLSISPLYV. Residues 43–59 are Extracellular-facing; it reads YKSTFAEDITHSESNEE. A helical transmembrane segment spans residues 60 to 80; sequence IFGVLSFVFWTLTLIPLIKYV. Residues 81 to 151 lie on the Cytoplasmic side of the membrane; sequence SIVLRADDNG…EKHKTLQTAL (71 aa). A helical membrane pass occupies residues 152 to 172; that stretch reads LIMVMIGTCMVIGDGVLTPAI. At 173–191 the chain is on the extracellular side; the sequence is SVFSAVSGLELSLSRDQHE. A helical transmembrane segment spans residues 192 to 212; the sequence is YAVIPITCVILVFLFALQHYG. Residues 213–215 are Cytoplasmic-facing; sequence THR. Residues 216-236 form a helical membrane-spanning segment; the sequence is VGFLFAPIVLAWLICMSMLGL. Residues 237 to 264 are Extracellular-facing; it reads YNIIHWNPQVYRALNPYYMLKFLRKTKK. A helical transmembrane segment spans residues 265–285; sequence SGWMSLGGILLCMTGSEAMFA. Residues 286–292 lie on the Cytoplasmic side of the membrane; that stretch reads DLGHFSY. A helical membrane pass occupies residues 293–313; it reads SAIQLAFTTLVYPALILGYMG. The Extracellular portion of the chain corresponds to 314-343; that stretch reads QAAYLSKHHTLNSTYQIGYYISVPESVRWP. N-linked (GlcNAc...) asparagine glycosylation is present at asparagine 325. Residues 344-364 traverse the membrane as a helical segment; that stretch reads VLVLAILASVVGSQAIISGTF. Topologically, residues 365-391 are cytoplasmic; the sequence is SIINQSQSLSCFPRVKVVHTSENIHGQ. Residues 392 to 412 form a helical membrane-spanning segment; it reads IYIPEINWLLMVLCIAVTVGF. Residues 413-422 are Extracellular-facing; the sequence is RDTKHMGNAS. Residue asparagine 420 is glycosylated (N-linked (GlcNAc...) asparagine). The chain crosses the membrane as a helical span at residues 423–443; sequence GLAVITVMLVTTCLTSLVIML. The Cytoplasmic portion of the chain corresponds to 444–451; it reads CWHRSPAL. A helical membrane pass occupies residues 452 to 472; it reads ALVFFLFFGSIEVLYFSASLI. At 473 to 476 the chain is on the extracellular side; sequence KFRE. Residues 477-497 form a helical membrane-spanning segment; it reads GAWLPIMLALILMAVMFIWHH. At 498 to 788 the chain is on the cytoplasmic side; the sequence is TTIKKYEFDL…LLEVGMVYVL (291 aa).

This sequence belongs to the HAK/KUP transporter (TC 2.A.72.3) family.

The protein resides in the membrane. High-affinity potassium transporter. In Oryza sativa subsp. japonica (Rice), this protein is Probable potassium transporter 9 (HAK9).